Here is a 273-residue protein sequence, read N- to C-terminus: uncharacterized protein (273 aa).

Residues 7–25 (FFRWAFLIATVYVAYYFLV) form a helical membrane-spanning segment. 2 disordered regions span residues 34–154 (KPQK…LKMK) and 168–273 (LHNS…DSLW). Residues 36–54 (QKSKLTKLGKQKQRQKQKN) show a composition bias toward basic residues. Residues 55–91 (TKKDTLVNRETPSKKSQKLETSDALKSKSKDSSKKEP) show a composition bias toward basic and acidic residues. Low complexity predominate over residues 92–101 (VVVPKKGTPK). Residues 115-144 (PKKEKLVGKNPAEKEDTTDVEDTQKLEQKH) are compositionally biased toward basic and acidic residues. Positions 145-154 (STTPSSLKMK) are enriched in polar residues. The segment covering 201-212 (KRQRQNQQKKLR) has biased composition (basic residues). Positions 213–240 (AKEMQELADEEQRRRLAAHRKELHEANR) are enriched in basic and acidic residues. Polar residues predominate over residues 245–266 (LNNSSRSAYSYINNGQAGSSKG).

The protein localises to the cytoplasm. Its subcellular location is the membrane. This is an uncharacterized protein from Schizosaccharomyces pombe (strain 972 / ATCC 24843) (Fission yeast).